The primary structure comprises 473 residues: 3-isopropylmalate dehydratase large subunit (473 aa).

[4Fe-4S] cluster is bound by residues Cys-348, Cys-408, and Cys-411. A disordered region spans residues 421-440 (GDEASASSSNRNFIGRQGSK).

Belongs to the aconitase/IPM isomerase family. LeuC type 1 subfamily. In terms of assembly, heterodimer of LeuC and LeuD. [4Fe-4S] cluster serves as cofactor.

It carries out the reaction (2R,3S)-3-isopropylmalate = (2S)-2-isopropylmalate. It participates in amino-acid biosynthesis; L-leucine biosynthesis; L-leucine from 3-methyl-2-oxobutanoate: step 2/4. Functionally, catalyzes the isomerization between 2-isopropylmalate and 3-isopropylmalate, via the formation of 2-isopropylmaleate. This chain is 3-isopropylmalate dehydratase large subunit, found in Haloferax volcanii (strain ATCC 29605 / DSM 3757 / JCM 8879 / NBRC 14742 / NCIMB 2012 / VKM B-1768 / DS2) (Halobacterium volcanii).